The chain runs to 606 residues: Armadillo repeat-containing X-linked protein 5 (606 aa).

The tract at residues 1 to 85 (MIGSKTKRKA…KVKKKKDKTN (85 aa)) is disordered. The segment covering 15–26 (GASSKPGTNSPA) has biased composition (polar residues). Basic and acidic residues predominate over residues 40 to 59 (VKAEPKEEWGNQAEARDEAV). ARM repeat units follow at residues 349 to 388 (CKSRTFSLEPVDFDKLVALLKLTRDPFIHEIATMIMGISP), 470 to 509 (VKFDYHHVVIYYVRYFISLLNKGSVKIKFQILRVLLCLSK), 511 to 551 (QANT…NINF), and 568 to 606 (SELISIFREAKEFDQKLQDLTDHSDPDVRDKVIRLILKL).

It belongs to the eutherian X-chromosome-specific Armcx family. As to expression, highly expressed in the developing neural tissues, neural crest derivatives and hind limbs.

This chain is Armadillo repeat-containing X-linked protein 5 (Armcx5), found in Mus musculus (Mouse).